A 529-amino-acid polypeptide reads, in one-letter code: uncharacterized protein (529 aa).

The 117-residue stretch at 13–129 (QTAMRKMRAL…LSTLCQEAQR (117 aa)) folds into the Arf-GAP domain. The C4-type zinc-finger motif lies at 28 to 51 (CFDCGARNPTWCTVTYGVFLCIDC). Residues 291–301 (QMEAKVAKDPT) are compositionally biased toward basic and acidic residues. Disordered regions lie at residues 291–313 (QMEA…GMGG), 335–357 (VLTF…DDKY), 398–424 (KSRY…GASP), and 468–493 (FGSE…SDLK). Residues 399 to 420 (SRYTASSSSSSTSRAPTTRLTA) are compositionally biased toward low complexity. The span at 476-487 (NGSQQRQSSQVP) shows a compositional bias: polar residues.

GTPase-activating protein for the ADP ribosylation factor family. This is an uncharacterized protein from Caenorhabditis elegans.